We begin with the raw amino-acid sequence, 152 residues long: Arginine repressor (152 aa).

Belongs to the ArgR family.

The protein localises to the cytoplasm. Its pathway is amino-acid biosynthesis; L-arginine biosynthesis [regulation]. Functionally, regulates arginine biosynthesis genes. This Lactococcus lactis subsp. lactis (strain IL1403) (Streptococcus lactis) protein is Arginine repressor.